The following is a 383-amino-acid chain: 2-aminoethylphosphonate--pyruvate transaminase (383 aa).

K192 bears the N6-(pyridoxal phosphate)lysine mark.

Belongs to the class-V pyridoxal-phosphate-dependent aminotransferase family. PhnW subfamily. In terms of assembly, homodimer. It depends on pyridoxal 5'-phosphate as a cofactor.

The catalysed reaction is (2-aminoethyl)phosphonate + pyruvate = phosphonoacetaldehyde + L-alanine. In terms of biological role, involved in phosphonate degradation. This chain is 2-aminoethylphosphonate--pyruvate transaminase, found in Rhizobium meliloti (strain 1021) (Ensifer meliloti).